We begin with the raw amino-acid sequence, 3175 residues long: Replicase polyprotein 1ab (3175 aa).

A C4-type; atypical zinc finger spans residues 25-44 (CEHGAGLCCEVDGSTLCAEC). The 91-residue stretch at 66–156 (SPVPVGHKFL…PAANSLIVTT (91 aa)) folds into the Peptidase C31 domain. The Peptidase C32 domain maps to 157 to 260 (DQEQDGFCWL…WSCLPAGNYG (104 aa)). Active-site for Nsp1 papain-like cysteine proteinase activity residues include Cys164 and His230. The segment at 261–339 (GYNPPGDGAC…KQHWRVKRAK (79 aa)) is OTU-like. Positions 261-360 (GYNPPGDGAC…RGICNCQRMS (100 aa)) constitute a Peptidase C33 domain. Cys270 acts as the For Nsp2 cysteine proteinase activity in catalysis. Cys319 provides a ligand contact to Zn(2+). His332 (for Nsp2 cysteine proteinase activity) is an active-site residue. Cys349, Cys354, and Cys356 together coordinate Zn(2+). A disordered region spans residues 386–451 (VVTPEGQPRP…TRLQGASTQE (66 aa)). Transmembrane regions (helical) follow at residues 530–550 (AVIA…SFAI), 551–571 (GLIP…SSAN), 625–645 (FDAA…ILYL), 829–849 (LIGG…STFT), 903–923 (YWIA…RLAI), 935–955 (LVLL…SLAG), and 977–997 (LVTM…LMGL). Residues 530–645 (AVIACLLPIW…DLCSFAILYL (116 aa)) form an HD1 region. The interval 829–997 (LIGGWIYGIC…ALAVYSLMGL (169 aa)) is HD2. The Peptidase S32 domain occupies 1065-1268 (GLFRSPKARG…MLIDGLSNRE (204 aa)). Catalysis depends on charge relay system; for 3C-like serine proteinase activity residues His1103, Asp1129, and Ser1184. The next 4 helical transmembrane spans lie at 1291-1311 (AYLP…KSVG), 1333-1353 (CLFH…WFYI), 1355-1375 (AAGT…MLFV), and 1385-1405 (GWAI…AALG). Positions 1291 to 1405 (AYLPYVLGFF…SITMLAAALG (115 aa)) are HD3. The N-linked (GlcNAc...) asparagine; by host glycan is linked to Asn1501. A disordered region spans residues 1577-1614 (NDTPVKPMPSRRRRKGLPKGAQLEWDRHQEEKRNAGDD). Basic and acidic residues predominate over residues 1600–1612 (EWDRHQEEKRNAG). The NiRAN domain occupies 1716–1883 (LANPVEAVNQ…DKVAAAVSGD (168 aa)). The 136-residue stretch at 2116 to 2251 (KYCLETDLES…TTPNQHYAAS (136 aa)) folds into the RdRp catalytic domain. The AV ZBD domain maps to 2371-2438 (SAVCTVCGAA…SPKQMVPKVP (68 aa)). 12 residues coordinate Zn(2+): Cys2374, Cys2377, Cys2387, Cys2392, Cys2395, His2399, His2402, Cys2403, Cys2412, His2414, Cys2423, and Cys2426. One can recognise a (+)RNA virus helicase ATP-binding domain in the interval 2496 to 2661 (PGSHIAVPLQ…LRHFVSLEPL (166 aa)). Position 2528–2535 (2528–2535 (GPPGSGKT)) interacts with ATP. The (+)RNA virus helicase C-terminal domain occupies 2662-2793 (RVCHRFGAAV…PPTACHLGQE (132 aa)). The AV-Nsp11N/CoV-Nsp15M domain maps to 2840-2930 (KISCLPRVAQ…LTEWVDGKAR (91 aa)). Residues 2932–3054 (LPDSLFSSGR…MVWRNATFYV (123 aa)) form the NendoU domain. Active-site residues include His2963, His2978, and Lys3007.

The protein belongs to the arteriviridae polyprotein family. In terms of assembly, nsp1 interacts with cellular transcription cofactor SND1/p100. Post-translationally, specific enzymatic cleavages in vivo by its own proteases yield mature proteins. There are two alternative pathways for processing. Either nsp4-5 is cleaved, which represents the major pathway or the nsp5-6 and nsp6-7 are processed, which represents the minor pathway. The major pathway occurs when nsp2 acts as a cofactor for nsp4.

It localises to the host nucleus. Its subcellular location is the host cytoplasm. The protein localises to the host membrane. It is found in the host perinuclear region. The catalysed reaction is RNA(n) + a ribonucleoside 5'-triphosphate = RNA(n+1) + diphosphate. It carries out the reaction ATP + H2O = ADP + phosphate + H(+). The enzyme catalyses Thiol-dependent hydrolysis of ester, thioester, amide, peptide and isopeptide bonds formed by the C-terminal Gly of ubiquitin (a 76-residue protein attached to proteins as an intracellular targeting signal).. It catalyses the reaction uridylyl-uridylyl-ribonucleotide-RNA = a 3'-end uridylyl-2',3'-cyclophospho-uridine-RNA + a 5'-end dephospho-ribonucleoside-RNA. Its function is as follows. The replicase polyprotein 1ab is a multifunctional protein: it contains the activities necessary for the transcription of negative stranded RNA, leader RNA, subgenomic mRNAs and progeny virion RNA as well as proteinases responsible for the cleavage of the polyprotein into functional products. Nsp1 is essential for viral subgenomic mRNA synthesis. Functionally, nsp2 cysteine proteinase which cleaves the nsp2/nsp3 site in the polyprotein. Also displays deubiquitinating and deISGylase activities. The deubiquitinating activity cleaves both ubiquitinated and ISGylated products and may therefore regulate ubiquitin and ISG15 dependent host innate immunity. In terms of biological role, the 3C-like serine proteinase chain is responsible for the majority of cleavages as it cleaves the C-terminus of the polyprotein. Its function is as follows. The helicase chain, which contains a zinc finger structure, displays RNA and DNA duplex-unwinding activities with 5' to 3' polarity. Plays a role in viral transcription/replication and prevents the simultaneous activation of host cell dsRNA sensors, such as MDA5/IFIH1, OAS, and PKR. Acts by degrading the 5'-polyuridines generated during replication of the poly(A) region of viral genomic and subgenomic RNAs. Catalyzes a two-step reaction in which a 2'3'-cyclic phosphate (2'3'-cP) is first generated by 2'-O transesterification, which is then hydrolyzed to a 3'-phosphate (3'-P). If not degraded, poly(U) RNA would hybridize with poly(A) RNA tails and activate host dsRNA sensors. The polypeptide is Replicase polyprotein 1ab (rep) (Equidae (horses)).